Reading from the N-terminus, the 539-residue chain is Chaperone Ric-8A (539 aa).

Residues 506-539 (PMGVTSDGRLGPLDEAAQKMLQRQESSDLDSDSD) are disordered.

Belongs to the synembryn family.

The protein resides in the cytoplasm. It localises to the cell cortex. Functionally, chaperone that specifically binds and folds nascent G alpha proteins prior to G protein heterotrimer formation, promoting their stability and activity: folds GNAI1, GNAO1, GNA13 and GNAQ. Does not fold G(s) G-alpha proteins GNAS nor GNAL. Also acts as a guanine nucleotide exchange factor (GEF) for G alpha proteins by stimulating exchange of bound GDP for free GTP. This Xenopus laevis (African clawed frog) protein is Chaperone Ric-8A (ric8a).